Reading from the N-terminus, the 268-residue chain is MATVPELNCEIAAFDSEENDLFFEADRPQKIKDCFQALDLGCPDESIQLQISQQHLDKSFRKAVSLIVAVEKLWQLPMSCPWSFQDEDPSTFFSFIFEEEPVLCDSWDDDDLLVCDVPIRQLHCRLRDEQQKCLVLSDPCELKALHLNGQNISQQVVFSMSFVQGETSNDKIPVALGLKGLNLYLSCVMKDGTPTLQLESVDPKQYPKKKMEKRFVFNKIEVKTKVEFESAQFPNWYISTSQAEHRPVFLGNSNGRDIVDFTMEPVSS.

A propeptide spanning residues 1–116 (MATVPELNCE…WDDDDLLVCD (116 aa)) is cleaved from the precursor.

It belongs to the IL-1 family. As to quaternary structure, monomer. In its precursor form, weakly interacts with full-length MEFV; the mature cytokine does not interact at all. Interacts with integrins ITGAV:ITGBV and ITGA5:ITGB1; integrin-binding is required for IL1B signaling. Interacts with cargo receptor TMED10; the interaction is direct and is required for the secretion of IL1B mature form. Interacts with HSP90AB1; the interaction facilitates cargo translocation into the ERGIC. Interacts with HSP90B1; the interaction facilitates cargo translocation into the ERGIC.

It is found in the cytoplasm. Its subcellular location is the cytosol. The protein localises to the secreted. It localises to the lysosome. The protein resides in the extracellular exosome. Functionally, potent pro-inflammatory cytokine. Initially discovered as the major endogenous pyrogen, induces prostaglandin synthesis, neutrophil influx and activation, T-cell activation and cytokine production, B-cell activation and antibody production, and fibroblast proliferation and collagen production. Promotes Th17 differentiation of T-cells. Synergizes with IL12/interleukin-12 to induce IFNG synthesis from T-helper 1 (Th1) cells. Plays a role in angiogenesis by inducing VEGF production synergistically with TNF and IL6. Involved in transduction of inflammation downstream of pyroptosis: its mature form is specifically released in the extracellular milieu by passing through the gasdermin-D (GSDMD) pore. This chain is Interleukin-1 beta, found in Rattus norvegicus (Rat).